Reading from the N-terminus, the 438-residue chain is Glutamate-1-semialdehyde 2,1-aminomutase (438 aa).

K272 is modified (N6-(pyridoxal phosphate)lysine).

This sequence belongs to the class-III pyridoxal-phosphate-dependent aminotransferase family. HemL subfamily. In terms of assembly, homodimer. Pyridoxal 5'-phosphate serves as cofactor.

It is found in the cytoplasm. The enzyme catalyses (S)-4-amino-5-oxopentanoate = 5-aminolevulinate. It participates in porphyrin-containing compound metabolism; protoporphyrin-IX biosynthesis; 5-aminolevulinate from L-glutamyl-tRNA(Glu): step 2/2. Its pathway is porphyrin-containing compound metabolism; chlorophyll biosynthesis. This chain is Glutamate-1-semialdehyde 2,1-aminomutase, found in Chloroflexus aggregans (strain MD-66 / DSM 9485).